A 481-amino-acid polypeptide reads, in one-letter code: Sialic acid-binding Ig-like lectin 16 (481 aa).

An N-terminal signal peptide occupies residues 1-16 (MLLLPLLLPVLGAGSL). Over 17–434 (NKDPSYSLQV…VHCKSGPMTG (418 aa)) the chain is Extracellular. The Ig-like V-type domain maps to 19-122 (DPSYSLQVQR…DEAWYFFRVE (104 aa)). Cystine bridges form between Cys37-Cys174, Cys42-Cys102, Cys165-Cys216, and Cys259-Cys306. N-linked (GlcNAc...) asparagine glycosylation is found at Asn43 and Asn78. Arg120 contacts N-acetylneuraminate. Ig-like C2-type domains lie at 147 to 232 (PDVY…RTVR), 238 to 322 (LELQ…LDLS), and 327 to 424 (PENL…LSFS). Residues Asn338 and Asn347 are each glycosylated (N-linked (GlcNAc...) asparagine). An intrachain disulfide couples Cys363 to Cys408. The helical transmembrane segment at 435–455 (VVLVAVGEVAMKILLLCLCLI) threads the bilayer. Residues 456-481 (LLRVRSCRRKAARAALGMEAADAVTD) are Cytoplasmic-facing.

Belongs to the immunoglobulin superfamily. SIGLEC (sialic acid binding Ig-like lectin) family. As to expression, expressed in bone marrow, fetal brain, fetal liver, lung and salivary gland. Detected in brain, macrophage, cancerous esophagus and lung at protein level.

It is found in the membrane. In terms of biological role, putative adhesion molecule that mediates sialic-acid dependent binding to cells. This is Sialic acid-binding Ig-like lectin 16 (SIGLEC16) from Homo sapiens (Human).